Here is a 545-residue protein sequence, read N- to C-terminus: 2-oxo-Delta(3)-4,5,5-trimethylcyclopentenylacetyl-CoA monooxygenase (545 aa).

Residues threonine 20, glutamate 39, 47–50, 59–60, tyrosine 65, and valine 112 contribute to the FAD site; these read TWYW and DT. Position 57–59 (57–59) interacts with NADP(+); that stretch reads RLD. Residues 193–199 and 216–217 each bind NADP(+); these read TGATGVQ and RT. FAD is bound at residue valine 446. An NADP(+)-binding site is contributed by tryptophan 501.

This sequence belongs to the FAD-binding monooxygenase family. In terms of assembly, homodimer. It depends on FAD as a cofactor.

The enzyme catalyses [(1R)-2,2,3-trimethyl-5-oxocyclopent-3-enyl]acetyl-CoA + NADPH + O2 + H(+) = [(2R)-3,3,4-trimethyl-6-oxo-3,6-dihydro-1H-pyran-2-yl]acetyl-CoA + NADP(+) + H2O. The protein operates within terpene metabolism; (R)-camphor degradation. Functionally, involved in the degradation of (+)-camphor. Catalyzes the lactonization of 2-oxo-delta(3)-4,5, 5-trimethylcyclopentenylacetyl-CoA (OT-CoA), a key intermediate in the metabolism of camphor. 2-Oxocyclopentyl ethyl acetate is also a good substrate, as is 2-oxocyclohexyl ethyl acetate and methyl-substituted cyclohexanones, but free acid is a poor substrate. The polypeptide is 2-oxo-Delta(3)-4,5,5-trimethylcyclopentenylacetyl-CoA monooxygenase (otemo) (Pseudomonas putida (Arthrobacter siderocapsulatus)).